The following is a 275-amino-acid chain: Large ribosomal subunit protein uL2 (275 aa).

The tract at residues 221-275 (RGTAMNPIDHPHGGGEGKNFGKHPVSPWGVQSKGKKTRKNKRTEKYILYNRKYKK) is disordered. The span at 253–262 (KGKKTRKNKR) shows a compositional bias: basic residues.

This sequence belongs to the universal ribosomal protein uL2 family. In terms of assembly, part of the 50S ribosomal subunit. Forms a bridge to the 30S subunit in the 70S ribosome.

In terms of biological role, one of the primary rRNA binding proteins. Required for association of the 30S and 50S subunits to form the 70S ribosome, for tRNA binding and peptide bond formation. It has been suggested to have peptidyltransferase activity; this is somewhat controversial. Makes several contacts with the 16S rRNA in the 70S ribosome. This chain is Large ribosomal subunit protein uL2, found in Wigglesworthia glossinidia brevipalpis.